The primary structure comprises 171 residues: Group 1 truncated hemoglobin LI410 (171 aa).

The N-terminal 23 residues, 1–23 (MMRTVQLRTLRPCIRAQQQPVRA), are a transit peptide targeting the chloroplast. Heme-binding residues include Tyr-63 and His-111.

It belongs to the truncated hemoglobin family. Group I subfamily. It depends on heme as a cofactor.

The protein resides in the plastid. It localises to the chloroplast. This Chlamydomonas moewusii (Chlamydomonas eugametos) protein is Group 1 truncated hemoglobin LI410 (LI410).